A 196-amino-acid polypeptide reads, in one-letter code: 7-methyl-GTP pyrophosphatase (196 aa).

Asp72 serves as the catalytic Proton acceptor.

It belongs to the Maf family. YceF subfamily. A divalent metal cation serves as cofactor.

The protein resides in the cytoplasm. The catalysed reaction is N(7)-methyl-GTP + H2O = N(7)-methyl-GMP + diphosphate + H(+). In terms of biological role, nucleoside triphosphate pyrophosphatase that hydrolyzes 7-methyl-GTP (m(7)GTP). May have a dual role in cell division arrest and in preventing the incorporation of modified nucleotides into cellular nucleic acids. The sequence is that of 7-methyl-GTP pyrophosphatase from Neisseria meningitidis serogroup B (strain ATCC BAA-335 / MC58).